A 1256-amino-acid polypeptide reads, in one-letter code: GPI inositol-deacylase (1256 aa).

Positions 37 to 48 are enriched in polar residues; sequence DVYANSTTNATA. A disordered region spans residues 37 to 203; that stretch reads DVYANSTTNA…MEKEEEQKFV (167 aa). N-linked (GlcNAc...) asparagine glycans are attached at residues asparagine 41 and asparagine 45. Residues 59-68 show a composition bias toward low complexity; it reads PRPSRPSQSS. The segment covering 69-83 has biased composition (polar residues); the sequence is AAERTSPESPSVRQS. A compositionally biased stretch (low complexity) spans 107–135; that stretch reads QSPSQQSQNQQQQQQQQQQQQQQQQQQQS. Residues 143–156 show a composition bias toward polar residues; sequence SGNFNWKLSHSRNG. Asparagine 155 carries an N-linked (GlcNAc...) asparagine glycan. Residues 165–180 show a composition bias toward low complexity; the sequence is FFSSSFSHSPSTPPLS. Residues 190–202 are compositionally biased toward basic and acidic residues; sequence HSKEMEKEEEQKF. The helical transmembrane segment at 214–234 threads the bilayer; sequence AITFVTLLISILGIGFLALVL. Asparagine 235 carries an N-linked (GlcNAc...) asparagine glycan. Residue serine 397 is part of the active site. N-linked (GlcNAc...) asparagine glycosylation is present at asparagine 582. 2 helical membrane passes run 882-902 and 929-949; these read LYMR…TLVL and SIPL…NSSS. Residue asparagine 960 is glycosylated (N-linked (GlcNAc...) asparagine). Transmembrane regions (helical) follow at residues 980–1000, 1005–1025, 1053–1073, 1103–1123, 1130–1150, and 1172–1192; these read PFFW…CTVF, LTLV…PGWI, ILLV…VCCL, SILL…VVWI, WLTP…IILV, and VLLF…AYML. Asparagine 1212, asparagine 1239, and asparagine 1242 each carry an N-linked (GlcNAc...) asparagine glycan.

This sequence belongs to the GPI inositol-deacylase family.

It is found in the endoplasmic reticulum membrane. In terms of biological role, involved in inositol deacylation of GPI-anchored proteins which plays important roles in the quality control and ER-associated degradation of GPI-anchored proteins. This is GPI inositol-deacylase (bst-1) from Neurospora crassa (strain ATCC 24698 / 74-OR23-1A / CBS 708.71 / DSM 1257 / FGSC 987).